Consider the following 325-residue polypeptide: Gamma-hemolysin component B (325 aa).

Positions 1 to 25 (MNMNKLVKSSVATSMALLLLSNTAN) are cleaved as a signal peptide.

It belongs to the aerolysin family. Toxicity requires sequential binding and synergistic association of a class S and a class F component which form heterooligomeric complexes. HlgB (class F) associates with either hlgA thus forming an AB toxin or with hlgC thus forming a CB toxin. Interacts with host AMFR.

Toxin that seems to act by forming pores in the membrane of the cell. Has a hemolytic and a leucotoxic activity. Promotes host AMFR-mediated inflammation by mediating 'Lys-27'-linked ubiquitination of TAB3, TAK1-TAB3 complex formation and phosphorylation of TAK1/MAP3K7. In turn, activates host NF-kappa-B signaling pathway. This chain is Gamma-hemolysin component B (hlgB), found in Staphylococcus aureus (strain MRSA252).